The sequence spans 204 residues: Holliday junction branch migration complex subunit RuvA (204 aa).

Residues 1 to 64 form a domain I region; the sequence is MIGRLRGVVI…EDAQLLYGFN (64 aa). Residues 65–143 form a domain II region; sequence HKQERALFRE…GWVSHDLFSP (79 aa). Residues 144–155 form a flexible linker region; it reads AEISLPARESVL. A domain III region spans residues 156 to 204; it reads RAPDSSEEAASALVALGYKPQQASQIVSKIAKEGMSVEDIIRESLRSLV.

The protein belongs to the RuvA family. As to quaternary structure, homotetramer. Forms an RuvA(8)-RuvB(12)-Holliday junction (HJ) complex. HJ DNA is sandwiched between 2 RuvA tetramers; dsDNA enters through RuvA and exits via RuvB. An RuvB hexamer assembles on each DNA strand where it exits the tetramer. Each RuvB hexamer is contacted by two RuvA subunits (via domain III) on 2 adjacent RuvB subunits; this complex drives branch migration. In the full resolvosome a probable DNA-RuvA(4)-RuvB(12)-RuvC(2) complex forms which resolves the HJ.

It localises to the cytoplasm. In terms of biological role, the RuvA-RuvB-RuvC complex processes Holliday junction (HJ) DNA during genetic recombination and DNA repair, while the RuvA-RuvB complex plays an important role in the rescue of blocked DNA replication forks via replication fork reversal (RFR). RuvA specifically binds to HJ cruciform DNA, conferring on it an open structure. The RuvB hexamer acts as an ATP-dependent pump, pulling dsDNA into and through the RuvAB complex. HJ branch migration allows RuvC to scan DNA until it finds its consensus sequence, where it cleaves and resolves the cruciform DNA. In Aeromonas salmonicida (strain A449), this protein is Holliday junction branch migration complex subunit RuvA.